Here is a 445-residue protein sequence, read N- to C-terminus: Ribosomal protein uS12 methylthiotransferase RimO (445 aa).

One can recognise an MTTase N-terminal domain in the interval 4-119 (IKVALVSLGC…LLESIKVFLK (116 aa)). 6 residues coordinate [4Fe-4S] cluster: Cys-13, Cys-48, Cys-82, Cys-156, Cys-160, and Cys-163. In terms of domain architecture, Radical SAM core spans 142-372 (TTPTYTAYVR…MILQQSISKD (231 aa)). The region spanning 375-441 (KEKIGKIYEV…EYDLIGVVYN (67 aa)) is the TRAM domain.

Belongs to the methylthiotransferase family. RimO subfamily. [4Fe-4S] cluster serves as cofactor.

It localises to the cytoplasm. It carries out the reaction L-aspartate(89)-[ribosomal protein uS12]-hydrogen + (sulfur carrier)-SH + AH2 + 2 S-adenosyl-L-methionine = 3-methylsulfanyl-L-aspartate(89)-[ribosomal protein uS12]-hydrogen + (sulfur carrier)-H + 5'-deoxyadenosine + L-methionine + A + S-adenosyl-L-homocysteine + 2 H(+). Its function is as follows. Catalyzes the methylthiolation of an aspartic acid residue of ribosomal protein uS12. The polypeptide is Ribosomal protein uS12 methylthiotransferase RimO (Clostridium botulinum (strain Okra / Type B1)).